The primary structure comprises 384 residues: Gibberellin 3-beta-dioxygenase 1 (384 aa).

The Fe2OG dioxygenase domain occupies 225-327 (TLTSTIHLNM…RISMPYFLGP (103 aa)). 3 residues coordinate Fe cation: His250, Asp252, and His308. The 2-oxoglutarate site is built by Arg318 and Ser320.

Belongs to the iron/ascorbate-dependent oxidoreductase family. L-ascorbate is required as a cofactor. Fe(2+) serves as cofactor. Expressed in unopened flowers.

The catalysed reaction is gibberellin A20 + 2-oxoglutarate + O2 = gibberellin A1 + succinate + CO2. It participates in plant hormone biosynthesis; gibberellin biosynthesis. In terms of biological role, catalyzes the 3-beta-hydroxylation of the inactive gibberellin precursors, leading to the formation of bioactive gibberellins. In vitro, converts the precursors GA20, GA5, GA44 and GA9 to the corresponding 3-beta-hydroxylated bioactive products GA1, GA3, GA38 and GA4, respectively. Involved in the production of bioactive GA for vegetative growth and development. May possess 2,3-desaturase activity, catalyzing the conversion of GA9 to 2,3-dehydro-GA9, and GA20 to GA5 (2,3-dehydro GA20). May possess 2-beta-hydroxylase activity, catalyzing the conversion of GA1 and GA4 to the corresponding 2-beta-hydroxylated products GA8 and GA34, respectively. This chain is Gibberellin 3-beta-dioxygenase 1, found in Oryza sativa subsp. japonica (Rice).